A 269-amino-acid polypeptide reads, in one-letter code: C-type lectin domain family 2 member G (269 aa).

The Cytoplasmic portion of the chain corresponds to 1-107; that stretch reads MNITRASLPM…SPESSAKLYC (107 aa). The chain crosses the membrane as a helical; Signal-anchor for type II membrane protein span at residues 108-128; that stretch reads CCGVIMVLTVAVVALSVALPA. The Extracellular portion of the chain corresponds to 129 to 269; sequence TKTEQILINK…SLHCPTPVPV (141 aa). The region spanning 150–254 is the C-type lectin domain; it reads VGNKCFYFSE…HYIPRIWICS (105 aa). N-linked (GlcNAc...) asparagine glycosylation is present at Asn-163. Residues Cys-171 and Cys-253 are joined by a disulfide bond.

Detected in vagina, eye, tongue, stomach and spleen.

Its subcellular location is the cell membrane. Inhibits osteoclast formation. The protein is C-type lectin domain family 2 member G (Clec2g) of Mus musculus (Mouse).